The primary structure comprises 328 residues: Tetraacyldisaccharide 4'-kinase (328 aa).

55-62 (TAGGNGKT) contacts ATP.

This sequence belongs to the LpxK family.

The enzyme catalyses a lipid A disaccharide + ATP = a lipid IVA + ADP + H(+). Its pathway is glycolipid biosynthesis; lipid IV(A) biosynthesis; lipid IV(A) from (3R)-3-hydroxytetradecanoyl-[acyl-carrier-protein] and UDP-N-acetyl-alpha-D-glucosamine: step 6/6. Its function is as follows. Transfers the gamma-phosphate of ATP to the 4'-position of a tetraacyldisaccharide 1-phosphate intermediate (termed DS-1-P) to form tetraacyldisaccharide 1,4'-bis-phosphate (lipid IVA). The protein is Tetraacyldisaccharide 4'-kinase of Escherichia fergusonii (strain ATCC 35469 / DSM 13698 / CCUG 18766 / IAM 14443 / JCM 21226 / LMG 7866 / NBRC 102419 / NCTC 12128 / CDC 0568-73).